A 525-amino-acid polypeptide reads, in one-letter code: GMP synthase [glutamine-hydrolyzing] (525 aa).

The Glutamine amidotransferase type-1 domain maps to 9 to 207 (RILILDFGSQ…VRDICQCEAL (199 aa)). The active-site Nucleophile is the Cys86. Catalysis depends on residues His181 and Glu183. The region spanning 208-400 (WTPAKIIDDA…LGLPYDMLYR (193 aa)) is the GMPS ATP-PPase domain. 235-241 (SGGVDSS) serves as a coordination point for ATP.

As to quaternary structure, homodimer.

The enzyme catalyses XMP + L-glutamine + ATP + H2O = GMP + L-glutamate + AMP + diphosphate + 2 H(+). Its pathway is purine metabolism; GMP biosynthesis; GMP from XMP (L-Gln route): step 1/1. Its function is as follows. Catalyzes the synthesis of GMP from XMP. The chain is GMP synthase [glutamine-hydrolyzing] from Shigella flexneri.